Consider the following 528-residue polypeptide: Phosphoenolpyruvate carboxykinase (ATP) (528 aa).

Positions 56, 192, and 198 each coordinate substrate. Residues Lys198, His217, and 233-241 (GLSGTGKTT) contribute to the ATP site. Mn(2+)-binding residues include Lys198 and His217. Position 254 (Asp254) interacts with Mn(2+). The ATP site is built by Glu282, Arg319, and Thr444. Residue Arg319 participates in substrate binding.

It belongs to the phosphoenolpyruvate carboxykinase (ATP) family. Mn(2+) serves as cofactor.

Its subcellular location is the cytoplasm. It carries out the reaction oxaloacetate + ATP = phosphoenolpyruvate + ADP + CO2. It functions in the pathway carbohydrate biosynthesis; gluconeogenesis. Involved in the gluconeogenesis. Catalyzes the conversion of oxaloacetate (OAA) to phosphoenolpyruvate (PEP) through direct phosphoryl transfer between the nucleoside triphosphate and OAA. The protein is Phosphoenolpyruvate carboxykinase (ATP) of Bacillus cereus (strain AH187).